Consider the following 54-residue polypeptide: Hemoglobin subunit omega (54 aa).

Residues 2-54 (HWTAEEKQIILAIWAKIDIEEAGAAALSRLLVVYPWTQRYFKNFGNLSSPTAI) enclose the Globin domain.

Belongs to the globin family.

In terms of biological role, hemoglobin omega chain is an embryonic-type beta-type chain found in prenatal and neonatal marsupials. In Notamacropus eugenii (Tammar wallaby), this protein is Hemoglobin subunit omega.